The sequence spans 1368 residues: MAP3K epsilon protein kinase 1 (1368 aa).

Residues 20–274 form the Protein kinase domain; sequence YMLGDEIGKG…AKTLLSHPWI (255 aa). HEAT repeat units follow at residues 25–62 and 86–125; these read EIGK…EDLN and SKTK…AVYI. ATP-binding positions include 26–34 and K49; that span reads IGKGAYGRV. D144 serves as the catalytic Proton acceptor. The stretch at 218–256 is one HEAT 3 repeat; the sequence is PYYDLQPMPALFRIVQDDNPPIPDSLSPDITDFLRQCFK. Disordered regions lie at residues 296–415 and 430–507; these read EATA…KNTS and QTSH…PVAD. The segment covering 351 to 364 has biased composition (acidic residues); it reads LGEEGTDNSEDDIM. Basic and acidic residues-rich tracts occupy residues 388-399 and 470-486; these read SDFHGKSERGET and SLHD…EGKP. The segment covering 488 to 502 has biased composition (polar residues); sequence EASTSMPTSNVNQGD. HEAT repeat units follow at residues 533–571, 628–653, 654–695, 699–737, and 750–788; these read SNDG…LFPL, IPKS…DFQE, NACL…SSPL, MFIA…VFKL, and AAKN…RVRS. The tract at residues 777–883 is disordered; it reads GGLDGQAPRV…ISLSANRTST (107 aa). Over residues 791–808 the composition is skewed to polar residues; it reads LDPNNPIFGQNETSSLSM. Basic and acidic residues-rich tracts occupy residues 813–826 and 836–852; these read DVLK…EEPS and SDVH…DKPR. HEAT repeat units lie at residues 903-940, 1025-1063, 1067-1105, 1112-1150, 1154-1191, 1196-1234, 1258-1281, 1282-1318, and 1348-1368; these read EQVR…HESR, ATSS…ADTT, YMCS…DPNC, ADAI…INKR, QAAE…ASRN, LRAH…DNRK, RHFV…NKTL, AVNG…HHPR, and QVLV…NTIL.

The protein belongs to the protein kinase superfamily. Ser/Thr protein kinase family. As to quaternary structure, interacts with SGP1. In terms of processing, autophosphorylated. Expressed in both the sporophytic and the gametophytic tissues, especially in dividing cells. Mostly present in flower buds and mature flowers. Also accumulates in embryos, in roots apices, trichomes and ovule integuments.

The protein resides in the cytoplasm. It is found in the cytoskeleton. It localises to the microtubule organizing center. Its subcellular location is the nucleus. The protein localises to the nucleolus. The protein resides in the cell membrane. The enzyme catalyses L-seryl-[protein] + ATP = O-phospho-L-seryl-[protein] + ADP + H(+). It catalyses the reaction L-threonyl-[protein] + ATP = O-phospho-L-threonyl-[protein] + ADP + H(+). Its function is as follows. Serine/threonine-protein kinase involved in the spatial and temporal control system organizing cortical activities in mitotic and postmitotic cells. Required for the normal functioning of the plasma membrane in developing pollen. Involved in the regulation of cell expansion, cell elongation, and embryo development. The protein is MAP3K epsilon protein kinase 1 of Arabidopsis thaliana (Mouse-ear cress).